The chain runs to 439 residues: uncharacterized protein (439 aa).

The region spanning 65 to 208 (TRPKRVFVLV…VYAFELTTEG (144 aa)) is the DAGKc domain.

This is an uncharacterized protein from Caenorhabditis elegans.